The primary structure comprises 179 residues: CASP-like protein 5A2 (179 aa).

The tract at residues M1 to P24 is disordered. Residues M1–T38 lie on the Cytoplasmic side of the membrane. A helical membrane pass occupies residues L39–M59. At A60–A70 the chain is on the extracellular side. The chain crosses the membrane as a helical span at residues F71–V91. Over D92 to D115 the chain is Cytoplasmic. Residues G116–I136 traverse the membrane as a helical segment. Topologically, residues D137 to T155 are extracellular. Residues A156–L176 form a helical membrane-spanning segment. The Cytoplasmic segment spans residues A177–R179.

The protein belongs to the Casparian strip membrane proteins (CASP) family. Homodimer and heterodimers.

It is found in the cell membrane. In Arabidopsis thaliana (Mouse-ear cress), this protein is CASP-like protein 5A2.